A 282-amino-acid polypeptide reads, in one-letter code: 4-hydroxy-3-methylbut-2-enyl diphosphate reductase (282 aa).

C14 contributes to the [4Fe-4S] cluster binding site. H43 and H78 together coordinate (2E)-4-hydroxy-3-methylbut-2-enyl diphosphate. H43 and H78 together coordinate dimethylallyl diphosphate. Residues H43 and H78 each coordinate isopentenyl diphosphate. [4Fe-4S] cluster is bound at residue C100. (2E)-4-hydroxy-3-methylbut-2-enyl diphosphate is bound at residue H128. H128 contacts dimethylallyl diphosphate. Position 128 (H128) interacts with isopentenyl diphosphate. E130 (proton donor) is an active-site residue. Position 164 (T164) interacts with (2E)-4-hydroxy-3-methylbut-2-enyl diphosphate. C192 provides a ligand contact to [4Fe-4S] cluster. 4 residues coordinate (2E)-4-hydroxy-3-methylbut-2-enyl diphosphate: S220, S221, N222, and S266. Residues S220, S221, N222, and S266 each contribute to the dimethylallyl diphosphate site. Residues S220, S221, N222, and S266 each coordinate isopentenyl diphosphate.

Belongs to the IspH family. The cofactor is [4Fe-4S] cluster.

It catalyses the reaction isopentenyl diphosphate + 2 oxidized [2Fe-2S]-[ferredoxin] + H2O = (2E)-4-hydroxy-3-methylbut-2-enyl diphosphate + 2 reduced [2Fe-2S]-[ferredoxin] + 2 H(+). It carries out the reaction dimethylallyl diphosphate + 2 oxidized [2Fe-2S]-[ferredoxin] + H2O = (2E)-4-hydroxy-3-methylbut-2-enyl diphosphate + 2 reduced [2Fe-2S]-[ferredoxin] + 2 H(+). Its pathway is isoprenoid biosynthesis; dimethylallyl diphosphate biosynthesis; dimethylallyl diphosphate from (2E)-4-hydroxy-3-methylbutenyl diphosphate: step 1/1. It functions in the pathway isoprenoid biosynthesis; isopentenyl diphosphate biosynthesis via DXP pathway; isopentenyl diphosphate from 1-deoxy-D-xylulose 5-phosphate: step 6/6. Its function is as follows. Catalyzes the conversion of 1-hydroxy-2-methyl-2-(E)-butenyl 4-diphosphate (HMBPP) into a mixture of isopentenyl diphosphate (IPP) and dimethylallyl diphosphate (DMAPP). Acts in the terminal step of the DOXP/MEP pathway for isoprenoid precursor biosynthesis. This chain is 4-hydroxy-3-methylbut-2-enyl diphosphate reductase, found in Clostridium perfringens (strain ATCC 13124 / DSM 756 / JCM 1290 / NCIMB 6125 / NCTC 8237 / Type A).